Consider the following 525-residue polypeptide: Protein ea59 (525 aa).

This chain is Protein ea59 (ea59), found in Escherichia coli (Bacteriophage lambda).